The chain runs to 307 residues: Synaptophysin (307 aa).

Topologically, residues 1 to 19 are cytoplasmic; the sequence is MDVVNQLVAGGQFRVVKEP. An MARVEL domain is found at 15-222; that stretch reads VVKEPLGFVK…NLWFVFKETG (208 aa). A helical transmembrane segment spans residues 20 to 43; that stretch reads LGFVKVLQWVFAIFAFATCGSYTG. Residues 44–101 lie on the Vesicular side of the membrane; it reads ELRLSVECANKTESALNIEVEFEYPFRLHQVYFDAPSCVKGGTTKIFLVGDYSSSAEF. N-linked (GlcNAc...) asparagine glycosylation is present at asparagine 53. Tyrosine 75 bears the Phosphotyrosine mark. A helical membrane pass occupies residues 102 to 125; the sequence is FVTVAVFAFLYSMGALATYIFLQN. At 126–132 the chain is on the cytoplasmic side; the sequence is KYRENNK. The helical transmembrane segment at 133 to 156 threads the bilayer; sequence GPMMDFLATAVFAFMWLVSSSAWA. The Vesicular segment spans residues 157-194; that stretch reads KGLSDVKMATDPENIIKEMPMCRQTGNTCKELRDPVTS. The chain crosses the membrane as a helical span at residues 195–218; that stretch reads GLNTSVVFGFLNLVLWVGNLWFVF. Topologically, residues 219-307 are cytoplasmic; it reads KETGWAAPFM…GAPTSFSNQM (89 aa). Residue threonine 221 is modified to Phosphothreonine. Positions 233–307 are disordered; sequence GAPEKQPAPG…GAPTSFSNQM (75 aa). Over residues 248–258 the composition is skewed to gly residues; it reads AGYGQGPGGYG. The tract at residues 249–298 is repeats, Gly-rich; sequence GYGQGPGGYGPQDSYGPQGGYQPDYGQPASGGGGYGPQGDYGQQGYGQQG. Over residues 259–276 the composition is skewed to low complexity; it reads PQDSYGPQGGYQPDYGQP. Phosphotyrosine is present on residues tyrosine 273 and tyrosine 289. Over residues 277–296 the composition is skewed to gly residues; the sequence is ASGGGGYGPQGDYGQQGYGQ.

This sequence belongs to the synaptophysin/synaptobrevin family. In terms of assembly, homohexamer or homotetramer. Interacts with SRCIN1. Interacts with VAMP2; the interaction is inhibited by interaction of VAPM2 with SEPT8. Ubiquitinated; mediated by SIAH1 or SIAH2 and leading to its subsequent proteasomal degradation. Post-translationally, phosphorylated by SRC. As to expression, expressed in the brain with expression in the cerebrum and the cerebellum.

The protein resides in the cytoplasmic vesicle. Its subcellular location is the secretory vesicle. It is found in the synaptic vesicle membrane. It localises to the synapse. The protein localises to the synaptosome. In terms of biological role, possibly involved in structural functions as organizing other membrane components or in targeting the vesicles to the plasma membrane. Involved in the regulation of short-term and long-term synaptic plasticity. The polypeptide is Synaptophysin (Syp) (Rattus norvegicus (Rat)).